The primary structure comprises 367 residues: Heme A synthase (367 aa).

5 helical membrane passes run 26–46 (IRGW…VGGA), 111–131 (LLAR…WVTG), 139–159 (LPLL…WWMV), 174–194 (LATH…IYRG), and 212–232 (AGAI…VAGL). A heme-binding site is contributed by His-274. A run of 3 helical transmembrane segments spans residues 276 to 296 (LGAY…LRAA), 305 to 325 (SVLL…TLLL), and 327 to 347 (VPIG…GFAI). His-335 is a binding site for heme.

Belongs to the COX15/CtaA family. Type 2 subfamily. Interacts with CtaB. Heme b is required as a cofactor.

It localises to the cell membrane. The catalysed reaction is Fe(II)-heme o + 2 A + H2O = Fe(II)-heme a + 2 AH2. It functions in the pathway porphyrin-containing compound metabolism; heme A biosynthesis; heme A from heme O: step 1/1. Its function is as follows. Catalyzes the conversion of heme O to heme A by two successive hydroxylations of the methyl group at C8. The first hydroxylation forms heme I, the second hydroxylation results in an unstable dihydroxymethyl group, which spontaneously dehydrates, resulting in the formyl group of heme A. This Rhizobium meliloti (strain 1021) (Ensifer meliloti) protein is Heme A synthase.